The sequence spans 379 residues: Homoserine O-succinyltransferase (379 aa).

The AB hydrolase-1 domain occupies 51-360 (NAVLICHALS…DAPQGHDAFL (310 aa)). The Nucleophile role is filled by serine 157. Arginine 227 is a binding site for substrate. Residues aspartate 323 and histidine 356 contribute to the active site. Aspartate 357 contacts substrate.

It belongs to the AB hydrolase superfamily. MetX family. Homodimer.

The protein resides in the cytoplasm. It carries out the reaction L-homoserine + succinyl-CoA = O-succinyl-L-homoserine + CoA. It functions in the pathway amino-acid biosynthesis; L-methionine biosynthesis via de novo pathway; O-succinyl-L-homoserine from L-homoserine: step 1/1. Transfers a succinyl group from succinyl-CoA to L-homoserine, forming succinyl-L-homoserine. The protein is Homoserine O-succinyltransferase of Pseudomonas fluorescens (strain ATCC BAA-477 / NRRL B-23932 / Pf-5).